A 76-amino-acid polypeptide reads, in one-letter code: UPF0248 protein MMP0286 (76 aa).

This sequence belongs to the UPF0248 family.

In Methanococcus maripaludis (strain DSM 14266 / JCM 13030 / NBRC 101832 / S2 / LL), this protein is UPF0248 protein MMP0286.